The chain runs to 215 residues: Vesicle-trafficking protein SEC22b-A (215 aa).

At 1–190 the chain is on the cytoplasmic side; that stretch reads MVLQTMIVRV…RSDAKYLNTR (190 aa). Positions 6–119 constitute a Longin domain; it reads MIVRVADSLP…YSFIEFDTYI (114 aa). In terms of domain architecture, v-SNARE coiled-coil homology spans 134–194; it reads NLGNINSELH…KYLNTRSTYA (61 aa). Residues 191 to 213 traverse the membrane as a helical segment; it reads STYAKVAAGAVIIITLIIYVRFW. Residues 214–215 lie on the Lumenal side of the membrane; it reads WL.

This sequence belongs to the synaptobrevin family. In terms of assembly, component of 2 distinct SNARE complexes.

It localises to the endoplasmic reticulum membrane. Its subcellular location is the endoplasmic reticulum-Golgi intermediate compartment membrane. The protein resides in the golgi apparatus. It is found in the cis-Golgi network membrane. The protein localises to the trans-Golgi network membrane. It localises to the melanosome. Functionally, SNARE involved in targeting and fusion of ER-derived transport vesicles with the Golgi complex as well as Golgi-derived retrograde transport vesicles with the ER. This chain is Vesicle-trafficking protein SEC22b-A, found in Danio rerio (Zebrafish).